Reading from the N-terminus, the 229-residue chain is Urease accessory protein UreF (229 aa).

It belongs to the UreF family. In terms of assembly, ureD, UreF and UreG form a complex that acts as a GTP-hydrolysis-dependent molecular chaperone, activating the urease apoprotein by helping to assemble the nickel containing metallocenter of UreC. The UreE protein probably delivers the nickel.

It is found in the cytoplasm. Required for maturation of urease via the functional incorporation of the urease nickel metallocenter. This chain is Urease accessory protein UreF, found in Alcanivorax borkumensis (strain ATCC 700651 / DSM 11573 / NCIMB 13689 / SK2).